Here is a 307-residue protein sequence, read N- to C-terminus: Delta-9 acyl-lipid desaturase 2 (307 aa).

Residues 1 to 17 are compositionally biased toward polar residues; sequence MSVTSTVEENHQKNPST. Positions 1–21 are disordered; that stretch reads MSVTSTVEENHQKNPSTPAAV. A helical transmembrane segment spans residues 53-73; the sequence is LALLAPFYFTWSALWVTFLFY. Residues His85 and His90 each coordinate Fe cation. Residues 85 to 90 carry the Histidine box-1 motif; the sequence is HRNLAH. A helical membrane pass occupies residues 99–119; sequence LEYLLAYCALLAIQGDPIDWV. 3 residues coordinate Fe cation: His122, His125, and His126. The Histidine box-2 motif lies at 122–126; sequence HRYHH. 2 helical membrane-spanning segments follow: residues 182–202 and 204–224; these read VLFH…MSFV and WGMG…NSLC. Fe cation-binding residues include His225, His254, His257, and His258. The Histidine box-3 motif lies at 254–258; sequence HNNHH.

Belongs to the fatty acid desaturase type 1 family. Fe cation serves as cofactor. Strongly expressed in flowers, roots, leaves, seedpods, and inflorescence meristems.

Its subcellular location is the endoplasmic reticulum membrane. It catalyses the reaction a 1-hexacosanoyl-2-acyl-phosphoglycerolipid + 2 Fe(II)-[cytochrome b5] + O2 + 2 H(+) = a 1-[(17Z)-hexacos-17-enoyl]-2-acyl-phosphoglycerolipid + 2 Fe(III)-[cytochrome b5] + 2 H2O. The enzyme catalyses a 1-tetracosanoyl-2-acyl-phosphoglycerolipid + 2 Fe(II)-[cytochrome b5] + O2 + 2 H(+) = a 1-[(15Z)-tetracos-15-enoyl]-2-acyl-phosphoglycerolipid + 2 Fe(III)-[cytochrome b5] + 2 H2O. It functions in the pathway lipid metabolism; polyunsaturated fatty acid biosynthesis. Functionally, involved in delta-9 desaturation of fatty acids. Plays a role in the production of very-long-chain monounsaturated fatty acids (VLCMUFAs) in seed lipids and in membrane phospholipids and sphingolipids. Acts as C-16:0 desaturase for monogalactosyl diacylglycerol (MGDG) and phosphatidylglycerol (PG). Is an essential component for cold adaptation. Is essential to adjust the acyl composition of organelle membrane lipid composition in response to cold stress. The chain is Delta-9 acyl-lipid desaturase 2 from Arabidopsis thaliana (Mouse-ear cress).